The primary structure comprises 782 residues: Coiled-coil alpha-helical rod protein 1 (782 aa).

2 stretches are compositionally biased toward basic and acidic residues: residues 62 to 74 and 208 to 218; these read ERDV…EPGR and ETRRAGEAKEL. 2 disordered regions span residues 62–82 and 177–218; these read ERDV…WGLE and EQLS…AKEL. 3 coiled-coil regions span residues 82–314, 344–437, and 498–691; these read EGSQ…ELTR, LMVQ…NAVS, and VADV…QQEG.

It is found in the cytoplasm. The protein localises to the nucleus. Its function is as follows. May be a regulator of keratinocyte proliferation or differentiation. The chain is Coiled-coil alpha-helical rod protein 1 (CCHCR1) from Pan troglodytes (Chimpanzee).